The primary structure comprises 104 residues: Urease subunit beta (104 aa).

It belongs to the urease beta subunit family. In terms of assembly, heterotrimer of UreA (gamma), UreB (beta) and UreC (alpha) subunits. Three heterotrimers associate to form the active enzyme.

The protein localises to the cytoplasm. The enzyme catalyses urea + 2 H2O + H(+) = hydrogencarbonate + 2 NH4(+). Its pathway is nitrogen metabolism; urea degradation; CO(2) and NH(3) from urea (urease route): step 1/1. This chain is Urease subunit beta, found in Rhodococcus opacus (strain B4).